Reading from the N-terminus, the 76-residue chain is Kappa-actitoxin-Avd4e (76 aa).

An N-terminal signal peptide occupies residues 1–19 (MNKALFLCLVVLCAAVVFA). Positions 20 to 31 (AEDLQKAKHAPF) are excised as a propeptide. Cystine bridges form between C37-C72, C39-C65, and C55-C73. Positions 45-47 (RGD) match the Cell attachment site motif.

It belongs to the sea anemone type 3 (BDS) potassium channel toxin family. In terms of tissue distribution, moderately expressed in the ectodermal tissue from the distal and proximal tentacles, body wall, and oral disk.

The protein resides in the secreted. It is found in the nematocyst. Is member of a fraction that shows antiangiogenic activity, since it inhibits human microvascular endothelial cells (HMEC) tubulogenesis. This protein could be a kunitz-type inhibitor with a RGD motif that could block angiogenesis in binding on integrins. Blocks Kv3 voltage-gated potassium channels. Reduces blood pressure. The sequence is that of Kappa-actitoxin-Avd4e from Anemonia viridis (Snakelocks anemone).